The following is a 59-amino-acid chain: Large ribosomal subunit protein bL32 (59 aa).

The protein belongs to the bacterial ribosomal protein bL32 family.

The sequence is that of Large ribosomal subunit protein bL32 from Limosilactobacillus reuteri (strain DSM 20016) (Lactobacillus reuteri).